A 360-amino-acid chain; its full sequence is Neutral protease 2 homolog SS1G_13741 (360 aa).

N-linked (GlcNAc...) asparagine glycosylation is present at asparagine 129. 2 cysteine pairs are disulfide-bonded: cysteine 189-cysteine 261 and cysteine 268-cysteine 286. Residue histidine 311 coordinates Zn(2+). Glutamate 312 is a catalytic residue. Zn(2+) is bound by residues histidine 315 and aspartate 326.

It belongs to the peptidase M35 family. Zn(2+) is required as a cofactor.

The protein localises to the secreted. The enzyme catalyses Preferential cleavage of bonds with hydrophobic residues in P1'. Also 3-Asn-|-Gln-4 and 8-Gly-|-Ser-9 bonds in insulin B chain.. In terms of biological role, secreted metalloproteinase that allows assimilation of proteinaceous substrates. Shows high activities on basic nuclear substrates such as histone and protamine. This chain is Neutral protease 2 homolog SS1G_13741, found in Sclerotinia sclerotiorum (strain ATCC 18683 / 1980 / Ss-1) (White mold).